The primary structure comprises 63 residues: Small ribosomal subunit protein bS21 (63 aa).

This sequence belongs to the bacterial ribosomal protein bS21 family.

The chain is Small ribosomal subunit protein bS21 from Porphyromonas gingivalis (strain ATCC BAA-308 / W83).